The following is a 434-amino-acid chain: Putative neutral sphingomyelinase (434 aa).

Glu-83 contributes to the Mg(2+) binding site. Catalysis depends on His-318, which acts as the Proton acceptor. Helical transmembrane passes span 366 to 388 (IFFF…FEVF) and 392 to 414 (FAVL…LIGL).

The protein belongs to the neutral sphingomyelinase family.

Its subcellular location is the membrane. It catalyses the reaction an N-(acyl)-sphingosylphosphocholine + H2O = an N-acyl-sphingoid base + phosphocholine + H(+). The catalysed reaction is a sphingomyelin + H2O = phosphocholine + an N-acylsphing-4-enine + H(+). It carries out the reaction an N-acyl-15-methylhexadecasphing-4-enine-1-phosphocholine + H2O = an N-acyl-15-methylhexadecasphing-4-enine + phosphocholine + H(+). Its pathway is lipid metabolism; sphingolipid metabolism. Catalyzes the hydrolysis of sphingomyelin producing a ceramide (N-acyl-sphingoid base) and a phosphocholine. C.elegans contain specific sphingoid bases, which are unique or different in structure compared to the sphingoid bases found in other animals. Two examples of these distinctive compounds are: 15-methylhexadecasphinganine and 15-methylhexadecasphing-4-enine. The sequence is that of Putative neutral sphingomyelinase from Caenorhabditis elegans.